The sequence spans 318 residues: ZAR1-like protein (318 aa).

A disordered region spans residues 149–211 (LSDPPEAGQP…PVDSSQPLGR (63 aa)). Over residues 155-169 (AGQPPPPLPPPSPPP) the composition is skewed to pro residues. A 3CxxC-type zinc finger spans residues 219 to 304 (PKYGYFHCKD…QELCGRCKDK (86 aa)).

This sequence belongs to the ZAR1 family. Interacts with YBX2.

It is found in the cytoplasm. The protein localises to the cytoplasmic ribonucleoprotein granule. Its function is as follows. mRNA-binding protein required for maternal mRNA storage, translation and degradation during oocyte maturation. Probably promotes formation of some phase-separated membraneless compartment that stores maternal mRNAs in oocytes: acts by undergoing liquid-liquid phase separation upon binding to maternal mRNAs. Binds to the 3'-UTR of maternal mRNAs, inhibiting their translation. This is ZAR1-like protein (ZAR1L) from Bos taurus (Bovine).